A 261-amino-acid polypeptide reads, in one-letter code: Probable RNA-binding protein ARP1 (261 aa).

In terms of domain architecture, RRM spans 17 to 94; sequence TKVFVGGLAW…RRANCNLASL (78 aa). Residues 96–122 are disordered; it reads GRLRKSPTMTSPQQGPKNGNRATPPHV. A compositionally biased stretch (polar residues) spans 102–116; sequence PTMTSPQQGPKNGNR.

As to expression, expressed in vasculature of leaves, roots and siliques.

The protein localises to the nucleus. Its function is as follows. Probable RNA-binding protein involved in the regulation of abscisic acid (ABA) response during seed germination. May regulate transcript levels of several germination-responsive genes under ABA. The polypeptide is Probable RNA-binding protein ARP1 (Arabidopsis thaliana (Mouse-ear cress)).